A 199-amino-acid polypeptide reads, in one-letter code: Tegument protein UL14 homolog (199 aa).

A compositionally biased stretch (polar residues) spans 176–191; that stretch reads TDMNQMQPQPISKNEN. The segment at 176–199 is disordered; it reads TDMNQMQPQPISKNENPPTPHTDV.

The protein belongs to the alphaherpesvirinae HHV-1 UL14 protein family.

The protein localises to the virion tegument. The protein resides in the host cytoplasm. Its subcellular location is the host nucleus. In terms of biological role, contributes to the nuclear transport of the viral transcriptional activator VP16 homolog during the early phase of infection. Therefore, participates indirectly in the regulation of the immediate-early gene expression. Additionally, seems to be important for efficient nuclear targeting of capsids. The chain is Tegument protein UL14 homolog from Varicella-zoster virus (strain Dumas) (HHV-3).